A 2488-amino-acid polypeptide reads, in one-letter code: MPAILVASKMKSGLPKPVHSAAPILHVPPARAGPQPCYLKLGSKVEVSKTTYPSQIPLKSQVLQGLQEPAGEGLPLRKSGSVENGFDTQIYTDWANHYLAKSGHKRLIRDLQQDVTDGVLLAQIIQVVANEKIEDINGCPKNRSQMIENIDACLNFLAAKGINIQGLSAEEIRNGNLKAILGLFFSLSRYKQQQQQPQKQHLSSPLPPAVSQVAGAPSQCQAGTPQQQVPVTPQAPCQPHQPAPHQQSKAQAEMQSSASSKDSSQSKIIRFTLGQKKISRLPGPTARVSAAGSEAKTRGGSTTANNRRSQSFNNYDKSKPVTSPPPPPSSHEKEPLASSASSHPGMSDNAPASLESGSSSTPTNCSTSSAIPQPGAATKPWRSKSLSVKHSATVSMLSVKPPGPEAPRPTPEAMKPAPNNQKSMLEKLKLFNSKGGSKAGEGPGSRDTSCERLETLPSFEESEELEAASRMLTTVGPASSSPKIALKGIAQRTFSRALTNKKSSLKGNEKEKEKQQREKDKEKSKDLAKRASVTERLDLKEEPKEDPSGAAVPEMPKKSSKIASFIPKGGKLNSAKKEPMAPSHSGIPKPGMKSMPGKSPSAPAPSKEGERSRSGKLSSGLPQQKPQLDGRHSSSSSSLASSEGKGPGGTTLNHSISSQTVSGSVGTTQTTGSNTVSVQLPQPQQQYNHPNTATVAPFLYRSQTDTEGNVTAESSSTGVSVEPSHFTKTGQPALEELTGEDPEARRLRTVKNIADLRQNLEETMSSLRGTQVTHSTLETTFDTNVTTEMSGRSILSLTGRPTPLSWRLGQSSPRLQAGDAPSMGNGYPPRANASRFINTESGRYVYSAPLRRQLASRGSSVCHVDVSDKAGDEMDLEGISMDAPGYMSDGDVLSKNIRTDDITSGYMTDGGLGLYTRRLNRLPDGMAVVRETLQRNTSLGLGDADSWDDSSSVSSGISDTIDNLSTDDINTSSSISSYANTPASSRKNLDVQTDAEKHSQVERNSLWSGDDVKKSDGGSDSGIKMEPGSKWRRNPSDVSDESDKSTSGKKNPVISQTGSWRRGMTAQVGITMPRTKPSAPAGALKTPGTGKTDDAKVSEKGRLSPKASQVKRSPSDAGRSSGDESKKPLPSSSRTPTANANSFGFKKQSGSAAGLAMITASGVTVTSRSATLGKIPKSSALVSRSAGRKSSMDGAQNQDDGYLALSSRTNLQYRSLPRPSKSNSRNGAGNRSSTSSIDSNISSKSAGLPVPKLREPSKTALGSSLPGLVNQTDKEKGISSDNESVASCNSVKVNPAAQPVSSPAQTSLQPGAKYPDVASPTLRRLFGGKPTKQVPIATAENMKNSVVISNPHATMTQQGNLDSPSGSGVLSSGSSSPLYSKNVDLNQSPLASSPSSAHSAPSNSLTWGTNASSSSAVSKDGLGFQSVSSLHTSCESIDISLSSGGVPSHNSSTGLIASSKDDSLTPFVRTNSVKTTLSESPLSSPAASPKFCRSTLPRKQDSDPHLDRNTLPKKGLRYTPTSQLRTQEDAKEWLRSHSAGGLQDTAANSPFSSGSSVTSPSGTRFNFSQLASPTTVTQMSLSNPTMLRTHSLSNADGQYDPYTDSRFRNSSMSLDEKSRTMSRSGSFRDGFEEESWEKSSVDNFVSRLHSSLHFSLPLFHHARYELVHGSSLSLVSSTSSVYSTPEEKCQSEIRKLRRELDASQEKVSALTTQLTANAHLVAAFEQSLGNMTIRLQSLTMTAEQKDSELNELRKTIELLKKQNAAAQAAINGVINTPELNCKGNGTAQSADLRIRRQHSSDSVSSINSATSHSSVGSNIESDSKKKKRKNWVNELRSSFKQAFGKKKSPKSASSHSDIEEMTDSSLPSSPKLPHNGSTGSTPLLRNSHSNSLISECMDSEAETVMQLRNELRDKEMKLTDIRLEALSSAHQLDQLREAMNRMQSEIEKLKAENDRLKSESQGSGCSRAPSQVSISASPRQSMGLSQHSLNLTESTSLDMLLDDTGECSARKEGGRHVKIVVSFQEEMKWKEDSRPHLFLIGCIGVSGKTKWDVLDGVVRRLFKEYIIHVDPVSQLGLNSDSVLGYSIGEIKRSNTSETPELLPCGYLVGENTTISVTVKGLAENSLDSLVFESLIPKPILQRYVSLLIEHRRIILSGPSGTGKTYLANRLSEYIVLREGRELTDGVIATFNVDHKSSKELRQYLSNLADQCNSENNAVDMPLVIILDNLHHVSSLGEIFNGLLNCKYHKCPYIIGTMNQATSSTPNLQLHHNFRWVLCANHTEPVKGFLGRFLRRKLMETEISGRVRNMELVKIIDWIPKVWHHLNRFLEAHSSSDVTIGPRLFLSCPIDVDGSRVWFTDLWNYSIIPYLLEAVREGLQLYGRRAPWEDPAKWVMDTYPWAASPQQHEWPPLLQLRPEDVGFDGYSMPREGSTSKQMPPSDAEGDPLMNMLMRLQEAANYSSPQSYDSDSNSNSHHDDILDSSLESTL.

The 108-residue stretch at 85-192 (GFDTQIYTDW…LFFSLSRYKQ (108 aa)) folds into the Calponin-homology (CH) domain. Low complexity-rich tracts occupy residues 194 to 204 (QQQPQKQHLSS), 221 to 247 (QAGT…PHQQ), and 255 to 267 (QSSA…SQSK). Disordered stretches follow at residues 194–675 (QQQP…GSNT) and 706–727 (TEGN…SHFT). Residues 299–315 (GGSTTANNRRSQSFNNY) show a composition bias toward polar residues. Residues 356–369 (SGSSSTPTNCSTSS) are compositionally biased toward low complexity. A compositionally biased stretch (polar residues) spans 384 to 396 (KSLSVKHSATVSM). The segment covering 401–410 (PPGPEAPRPT) has biased composition (pro residues). Polar residues predominate over residues 492-506 (RTFSRALTNKKSSLK). Residues 498–531 (LTNKKSSLKGNEKEKEKQQREKDKEKSKDLAKRA) are a coiled coil. Basic and acidic residues predominate over residues 507–547 (GNEKEKEKQQREKDKEKSKDLAKRASVTERLDLKEEPKEDP). Residues 592 to 606 (MKSMPGKSPSAPAPS) are compositionally biased toward low complexity. Polar residues predominate over residues 615-626 (GKLSSGLPQQKP). Low complexity-rich tracts occupy residues 633-642 (SSSSSSLASS) and 657-675 (SSQT…GSNT). A compositionally biased stretch (polar residues) spans 706 to 719 (TEGNVTAESSSTGV). Positions 743–771 (EARRLRTVKNIADLRQNLEETMSSLRGTQ) form a coiled coil. 9 disordered regions span residues 804–824 (LSWR…PSMG), 939–1151 (LGLG…QSGS), 1177–1200 (KSSA…NQDD), 1213–1283 (YRSL…SDNE), 1295–1338 (PAAQ…PIAT), 1355–1412 (MTQQ…TNAS), 1440–1460 (SLSS…ASSK), 1473–1560 (VKTT…VTSP), and 1591–1629 (SLSN…SFRD). The segment covering 939–985 (LGLGDADSWDDSSSVSSGISDTIDNLSTDDINTSSSISSYANTPASS) has biased composition (low complexity). Positions 1091 to 1102 (KTDDAKVSEKGR) are enriched in basic and acidic residues. Positions 1130–1142 (PSSSRTPTANANS) are enriched in polar residues. A compositionally biased stretch (low complexity) spans 1220-1245 (SKSNSRNGAGNRSSTSSIDSNISSKS). The segment covering 1299 to 1309 (PVSSPAQTSLQ) has biased composition (polar residues). Low complexity-rich tracts occupy residues 1363-1380 (SPSG…PLYS) and 1388-1404 (SPLA…PSNS). A compositionally biased stretch (polar residues) spans 1440 to 1456 (SLSSGGVPSHNSSTGLI). A compositionally biased stretch (low complexity) spans 1477–1489 (LSESPLSSPAASP). 3 positions are modified to phosphoserine: Ser-1480, Ser-1484, and Ser-1488. Basic and acidic residues-rich tracts occupy residues 1498–1510 (RKQD…DRNT) and 1526–1535 (TQEDAKEWLR). The segment covering 1549–1560 (SPFSSGSSVTSP) has biased composition (low complexity). The stretch at 1686-1773 (EEKCQSEIRK…AAAQAAINGV (88 aa)) forms a coiled coil. Disordered regions lie at residues 1790–1887 (ADLR…LRNS) and 1951–1985 (AEND…MGLS). 3 stretches are compositionally biased toward polar residues: residues 1800–1820 (SDSV…SNIE), 1875–1887 (NGST…LRNS), and 1959–1985 (ESQG…MGLS). Residues 1897-1964 (MDSEAETVMQ…RLKSESQGSG (68 aa)) are a coiled coil. Residue Ser-1977 is modified to Phosphoserine. An ATP-binding site is contributed by 2157-2164 (GPSGTGKT). A disordered region spans residues 2423–2488 (DGYSMPREGS…ILDSSLESTL (66 aa)). The segment covering 2460 to 2473 (YSSPQSYDSDSNSN) has biased composition (low complexity).

This sequence belongs to the Nav/unc-53 family. Highly expressed in the brain, kidney and liver. Also expressed in the thyroid, mammary gland, spinal cord, heart, placenta and lung. Abundantly expressed in colon cancers.

It is found in the nucleus. The catalysed reaction is ATP + H2O = ADP + phosphate + H(+). Possesses 3' to 5' helicase activity and exonuclease activity. Involved in neuronal development, specifically in the development of different sensory organs. The chain is Neuron navigator 2 (NAV2) from Homo sapiens (Human).